A 341-amino-acid polypeptide reads, in one-letter code: UDP-3-O-acylglucosamine N-acyltransferase (341 aa).

The active-site Proton acceptor is H255.

This sequence belongs to the transferase hexapeptide repeat family. LpxD subfamily. Homotrimer.

The catalysed reaction is a UDP-3-O-[(3R)-3-hydroxyacyl]-alpha-D-glucosamine + a (3R)-hydroxyacyl-[ACP] = a UDP-2-N,3-O-bis[(3R)-3-hydroxyacyl]-alpha-D-glucosamine + holo-[ACP] + H(+). Its pathway is bacterial outer membrane biogenesis; LPS lipid A biosynthesis. Its function is as follows. Catalyzes the N-acylation of UDP-3-O-acylglucosamine using 3-hydroxyacyl-ACP as the acyl donor. Is involved in the biosynthesis of lipid A, a phosphorylated glycolipid that anchors the lipopolysaccharide to the outer membrane of the cell. This chain is UDP-3-O-acylglucosamine N-acyltransferase, found in Granulibacter bethesdensis (strain ATCC BAA-1260 / CGDNIH1).